The chain runs to 298 residues: Transcription factor SRM1 (298 aa).

Residues 7-62 (SDGSVWSREDDIAFERALANNTDESEERWEKIAADVPGKSVEQIKEHYELLVEDVT) form the SANT domain. Residues 68 to 118 (CVPLPAYGSPEGSNGHAGDEGASSKKGGNSHAGESNQAGKSKSDQERRKGI) form a disordered region. Basic and acidic residues predominate over residues 108-118 (SKSDQERRKGI). Positions 111-168 (DQERRKGIAWTEDEHRLFLLGLDKYGKGDWRSISRNFVVTRTPTQVASHAQKYFIRLN) constitute an HTH myb-type domain. Positions 140–164 (WRSISRNFVVTRTPTQVASHAQKYF) form a DNA-binding region, H-T-H motif. The segment covering 182–200 (ITSVGNADVSTPQGPITGQ) has biased composition (polar residues). A disordered region spans residues 182-245 (ITSVGNADVS…GPPMYGTPAI (64 aa)). Low complexity predominate over residues 201 to 215 (NNSNNNNNNNNNNSS).

As to expression, expressed in young seedlings, developing leaves, sepals and trichomes.

The protein resides in the nucleus. Its function is as follows. Transcription activator that coordinates abscisic acid (ABA) biosynthesis and signaling-related genes via binding to the specific promoter motif 5'-(A/T)AACCAT-3'. Represses ABA-mediated salt (e.g. NaCl and KCl) stress tolerance. Regulates leaf shape and promotes vegetative growth. The chain is Transcription factor SRM1 from Arabidopsis thaliana (Mouse-ear cress).